The chain runs to 348 residues: NADH-quinone oxidoreductase subunit H (348 aa).

The next 9 membrane-spanning stretches (helical) occupy residues 13–33 (LIMV…IAFL), 50–70 (PNVV…KFIL), 82–102 (AVFL…YAVI), 115–135 (VGIL…IMGG), 161–181 (IGLV…TDIV), 198–218 (FLDW…ISGL), 258–278 (AIVL…LPIV), 285–305 (WVPG…MIAL), and 321–341 (LGWK…AFVL).

This sequence belongs to the complex I subunit 1 family. As to quaternary structure, NDH-1 is composed of 14 different subunits. Subunits NuoA, H, J, K, L, M, N constitute the membrane sector of the complex.

The protein localises to the cell inner membrane. The catalysed reaction is a quinone + NADH + 5 H(+)(in) = a quinol + NAD(+) + 4 H(+)(out). Its function is as follows. NDH-1 shuttles electrons from NADH, via FMN and iron-sulfur (Fe-S) centers, to quinones in the respiratory chain. The immediate electron acceptor for the enzyme in this species is believed to be ubiquinone. Couples the redox reaction to proton translocation (for every two electrons transferred, four hydrogen ions are translocated across the cytoplasmic membrane), and thus conserves the redox energy in a proton gradient. This subunit may bind ubiquinone. The sequence is that of NADH-quinone oxidoreductase subunit H from Agrobacterium fabrum (strain C58 / ATCC 33970) (Agrobacterium tumefaciens (strain C58)).